The primary structure comprises 101 residues: MGTRFLLALCLVLLVLGFEVQGAQLPQQDERPSPALLSQVQESLSSYWESAKAAAQKLYEKTYLPAVDEKLRDLYSKSTAAMSTYTGIFTDQVLSVLKGEE.

Positions methionine 1–glycine 22 are cleaved as a signal peptide. Residues alanine 23 to glutamine 28 constitute a propeptide, removed in mature form. The tract at residues alanine 66–leucine 74 is lipid binding. Residues serine 78–glutamate 101 form a lipoprotein lipase cofactor region.

This sequence belongs to the apolipoprotein C2 family. Proapolipoprotein C-II is synthesized as a sialic acid containing glycoprotein which is subsequently desialylated prior to its proteolytic processing. In terms of processing, proapolipoprotein C-II, the major form found in plasma undergoes proteolytic cleavage of its N-terminal hexapeptide to generate apolipoprotein C-II, which occurs as the minor form in plasma.

The protein resides in the secreted. In terms of biological role, component of chylomicrons, very low-density lipoproteins (VLDL), low-density lipoproteins (LDL), and high-density lipoproteins (HDL) in plasma. Plays an important role in lipoprotein metabolism as an activator of lipoprotein lipase. Both proapolipoprotein C-II and apolipoprotein C-II can activate lipoprotein lipase. This is Apolipoprotein C-II (APOC2) from Papio anubis (Olive baboon).